The chain runs to 63 residues: Large ribosomal subunit protein bL32 (63 aa).

A compositionally biased stretch (basic residues) spans 1 to 18 (MAHPKRRISRSRRDKRRA). Residues 1–27 (MAHPKRRISRSRRDKRRAQYNAKTKAP) are disordered.

Belongs to the bacterial ribosomal protein bL32 family.

This chain is Large ribosomal subunit protein bL32, found in Chloroherpeton thalassium (strain ATCC 35110 / GB-78).